The following is a 95-amino-acid chain: Small ribosomal subunit protein uS17 (95 aa).

The protein belongs to the universal ribosomal protein uS17 family. Part of the 30S ribosomal subunit.

Functionally, one of the primary rRNA binding proteins, it binds specifically to the 5'-end of 16S ribosomal RNA. The polypeptide is Small ribosomal subunit protein uS17 (Phytoplasma australiense).